The chain runs to 289 residues: O-methyltransferase asqN (289 aa).

Asp155 serves as a coordination point for S-adenosyl-L-methionine. His195 acts as the Proton acceptor in catalysis.

The protein belongs to the class I-like SAM-binding methyltransferase superfamily. Cation-independent O-methyltransferase family.

Its pathway is secondary metabolite biosynthesis. The protein operates within alkaloid biosynthesis. It participates in mycotoxin biosynthesis. Functionally, O-methyltransferase; part of the gene cluster that mediates the biosynthesis of the aspoquinolone mycotoxins. The role of asqN within the aspoquinolone pathway has still to be determined. The first step of the pathway is catalyzed by the nonribosomal peptide synthetase asqK that condenses anthranilic acid and O-methyl-L-tyrosine to produce 4'-methoxycyclopeptin. 4'-methoxycyclopeptin is then converted to 4'-methoxydehydrocyclopeptin by the ketoglutarate-dependent dioxygenase asqJ. AsqJ also converts its first product 4'-methoxydehydrocyclopeptin to 4'-methoxycyclopenin. The following conversion of 4'-methoxycyclopenin into 4'-methoxyviridicatin is catalyzed by the cyclopenase asqI. 4'-methoxyviridicatin is the precursor of quinolone natural products, and is further converted to quinolinone B. The prenyltransferase asqH1 then catalyzes the canonical Friedel-Crafts alkylation of quinolinone B with dimethylallyl cation to yield dimethylallyl quinolone, which is subjected to FAD-dependent dehydrogenation by the FAD-linked oxidoreductase asqF to yield conjugated aryl diene. The delta(3') double bond then serves as the site of the second alkylation with DMAPP catalyzed by the prenyltransferase asqH2 to yield a carbenium ion intermediate, which can be attacked by H(2)O to yield a styrenyl quinolone containing a C3'-hydroxyprenyl chain. The FAD-dependent monooxygenase asqG performs epoxidation of the terminal C7'-C8' olefin. Finally, after dehydratation of the epoxide at C3 by asqC, the quinolone epoxide rearrangement protein asqO catalyzes an enzymatic 3-exo-tet cyclization to yield the cyclopropyl-THF ring system in aspoquinolone. The chain is O-methyltransferase asqN from Emericella nidulans (strain FGSC A4 / ATCC 38163 / CBS 112.46 / NRRL 194 / M139) (Aspergillus nidulans).